The chain runs to 556 residues: Glutamine--tRNA ligase (556 aa).

The short motif at 34 to 44 is the 'HIGH' region element; that stretch reads PEPNGYLHIGH. ATP is bound by residues 35–37 and 41–47; these read EPN and HIGHAKS. Asp67 and Tyr212 together coordinate L-glutamine. ATP is bound by residues Thr231, 261 to 262, and 269 to 271; these read RL and MSK. The 'KMSKS' region signature appears at 268 to 272; it reads VMSKR.

Belongs to the class-I aminoacyl-tRNA synthetase family. In terms of assembly, monomer.

The protein resides in the cytoplasm. The catalysed reaction is tRNA(Gln) + L-glutamine + ATP = L-glutaminyl-tRNA(Gln) + AMP + diphosphate. The protein is Glutamine--tRNA ligase of Vibrio vulnificus (strain YJ016).